The following is a 147-amino-acid chain: Sentan (147 aa).

Positions 1–32 are disordered; that stretch reads MGGCMHSTQDKSLHLEGDPNPSAAPTSTCAPR. Residues 8–17 are compositionally biased toward basic and acidic residues; the sequence is TQDKSLHLEG.

The protein belongs to the S-100 family.

Its subcellular location is the cell projection. It is found in the cilium. In terms of biological role, may be a component of the linker structure that bridges the ciliary membrane and peripheral singlet microtubules. This is Sentan (SNTN) from Homo sapiens (Human).